The sequence spans 122 residues: Large ribosomal subunit protein bL19 (122 aa).

Belongs to the bacterial ribosomal protein bL19 family.

This protein is located at the 30S-50S ribosomal subunit interface and may play a role in the structure and function of the aminoacyl-tRNA binding site. The sequence is that of Large ribosomal subunit protein bL19 from Chlamydia abortus (strain DSM 27085 / S26/3) (Chlamydophila abortus).